The sequence spans 153 residues: Pheromone-binding protein Gp-9 (153 aa).

The first 19 residues, 1–19 (MKTFVLHIFIFALVAFASA), serve as a signal peptide directing secretion. 3 cysteine pairs are disulfide-bonded: C37–C77, C73–C129, and C118–C138.

Belongs to the PBP/GOBP family. As to quaternary structure, homodimer.

It is found in the secreted. Colony queen number, a major feature of social organization, is associated with worker genotype for Gp-9. Colonies are headed by either a single reproductive queen (monogyne form) or multiple queens (polygyne form). Differences in worker Gp-9 genotypes between social forms may cause differences in workers' abilities to recognize queens and regulate their numbers. This is Pheromone-binding protein Gp-9 from Solenopsis saevissima (Fire ant).